Consider the following 469-residue polypeptide: DENN domain-containing protein 2D (469 aa).

The segment at 17–44 (LPRLRAGQSQNNPGEAVTEPERIQEHSP) is disordered. One can recognise a uDENN domain in the interval 55–204 (EYLLVVSLKK…AFPAPGKTVT (150 aa)). Positions 226–359 (HLEHVDFSVL…LQDDILDSLG (134 aa)) constitute a cDENN domain. Residues 361–445 (GINELKTSEQ…QEAEKSRNPP (85 aa)) form the dDENN domain.

It localises to the cytoplasm. Guanine nucleotide exchange factor (GEF) which may activate RAB9A and RAB9B. Promotes the exchange of GDP to GTP, converting inactive GDP-bound Rab proteins into their active GTP-bound form. The polypeptide is DENN domain-containing protein 2D (Dennd2d) (Mus musculus (Mouse)).